We begin with the raw amino-acid sequence, 117 residues long: Large ribosomal subunit protein uL22 (117 aa).

This sequence belongs to the universal ribosomal protein uL22 family. In terms of assembly, part of the 50S ribosomal subunit.

In terms of biological role, this protein binds specifically to 23S rRNA; its binding is stimulated by other ribosomal proteins, e.g. L4, L17, and L20. It is important during the early stages of 50S assembly. It makes multiple contacts with different domains of the 23S rRNA in the assembled 50S subunit and ribosome. Its function is as follows. The globular domain of the protein is located near the polypeptide exit tunnel on the outside of the subunit, while an extended beta-hairpin is found that lines the wall of the exit tunnel in the center of the 70S ribosome. This Lactobacillus helveticus (strain DPC 4571) protein is Large ribosomal subunit protein uL22.